A 251-amino-acid chain; its full sequence is Glucosamine-6-phosphate deaminase (251 aa).

The Proton acceptor; for enolization step role is filled by D73. The active-site For ring-opening step is N142. The active-site Proton acceptor; for ring-opening step is the H144. E149 acts as the For ring-opening step in catalysis.

This sequence belongs to the glucosamine/galactosamine-6-phosphate isomerase family. NagB subfamily.

The enzyme catalyses alpha-D-glucosamine 6-phosphate + H2O = beta-D-fructose 6-phosphate + NH4(+). Its pathway is amino-sugar metabolism; N-acetylneuraminate degradation; D-fructose 6-phosphate from N-acetylneuraminate: step 5/5. Catalyzes the reversible isomerization-deamination of glucosamine 6-phosphate (GlcN6P) to form fructose 6-phosphate (Fru6P) and ammonium ion. The protein is Glucosamine-6-phosphate deaminase of Rhodopirellula baltica (strain DSM 10527 / NCIMB 13988 / SH1).